The sequence spans 373 residues: Dual-specificity RNA methyltransferase RlmN (373 aa).

The active-site Proton acceptor is Glu-94. The Radical SAM core domain maps to Glu-100–Asp-339. Cysteines 107 and 344 form a disulfide. 3 residues coordinate [4Fe-4S] cluster: Cys-114, Cys-118, and Cys-121. Residues Gly-168 to Glu-169, Ser-200, Ser-222 to His-224, and Asn-301 each bind S-adenosyl-L-methionine. Catalysis depends on Cys-344, which acts as the S-methylcysteine intermediate.

It belongs to the radical SAM superfamily. RlmN family. [4Fe-4S] cluster is required as a cofactor.

Its subcellular location is the cytoplasm. It catalyses the reaction adenosine(2503) in 23S rRNA + 2 reduced [2Fe-2S]-[ferredoxin] + 2 S-adenosyl-L-methionine = 2-methyladenosine(2503) in 23S rRNA + 5'-deoxyadenosine + L-methionine + 2 oxidized [2Fe-2S]-[ferredoxin] + S-adenosyl-L-homocysteine. The catalysed reaction is adenosine(37) in tRNA + 2 reduced [2Fe-2S]-[ferredoxin] + 2 S-adenosyl-L-methionine = 2-methyladenosine(37) in tRNA + 5'-deoxyadenosine + L-methionine + 2 oxidized [2Fe-2S]-[ferredoxin] + S-adenosyl-L-homocysteine. Its function is as follows. Specifically methylates position 2 of adenine 2503 in 23S rRNA and position 2 of adenine 37 in tRNAs. m2A2503 modification seems to play a crucial role in the proofreading step occurring at the peptidyl transferase center and thus would serve to optimize ribosomal fidelity. This is Dual-specificity RNA methyltransferase RlmN from Shewanella sediminis (strain HAW-EB3).